The sequence spans 185 residues: Prenylated Rab acceptor protein 1 (185 aa).

Topologically, residues 1 to 78 are cytoplasmic; that stretch reads MAAQKDQQKD…RNVEYYQSNY (78 aa). The tract at residues 30–54 is required for interaction with prenylated RAB3A and VAMP2; sequence AGREWLERRRATIRPWGTFVDQQRF. The next 2 helical transmembrane spans lie at 79 to 94 and 95 to 112; these read VFVFLGLILYCVVTSP and MLLVALAVFFGACYILYL. Over 113–131 the chain is Cytoplasmic; it reads RTLQSKLVLFGREVSPAHQ. 2 helical membrane passes run 132–148 and 149–165; these read YALAGGVSFPFFWLAGA and GSAVFWVLGATLVLIGS. A required for interaction with GDI1 region spans residues 165-185; the sequence is SHAAFHQMEPADGEELQMEPV. Residues 166–185 lie on the Cytoplasmic side of the membrane; sequence HAAFHQMEPADGEELQMEPV. The interval 175–185 is required for interaction with prenylated RAB3A and VAMP2; the sequence is ADGEELQMEPV. The segment at 175–185 is homodimerization; that stretch reads ADGEELQMEPV.

Belongs to the PRA1 family. As to quaternary structure, homodimer. Interacts with VAMP2 (synaptobrevin-2), GDI1, NRDG1 and PCLO. Interacts with prenylated Rab proteins (including RAB5 and RAB6), and with the members of the Ras superfamily HRAS, RHOA, TC21, and RAP1A.

The protein localises to the cell membrane. It is found in the cytoplasm. It localises to the golgi apparatus. The protein resides in the cytoplasmic vesicle. Its subcellular location is the secretory vesicle. The protein localises to the synaptic vesicle. General Rab protein regulator required for vesicle formation from the Golgi complex. May control vesicle docking and fusion by mediating the action of Rab GTPases to the SNARE complexes. In addition it inhibits the removal of Rab GTPases from the membrane by GDI1. The protein is Prenylated Rab acceptor protein 1 (Rabac1) of Mus musculus (Mouse).